Here is a 428-residue protein sequence, read N- to C-terminus: L-lysine N6-monooxygenase MbtG (428 aa).

The signal sequence occupies residues 1–20 (MSTLAILGAGAKAVAVAAKA).

Belongs to the lysine N(6)-hydroxylase/L-ornithine N(5)-oxygenase family. Requires FAD as cofactor.

The enzyme catalyses L-lysine + NADPH + O2 = N(6)-hydroxy-L-lysine + NADP(+) + H2O. Its pathway is siderophore biosynthesis; mycobactin biosynthesis. In terms of biological role, flavoprotein monooxygenase required for N-hydroxylation of the two acylated lysine residues during mycobactin assembly, thus producing the hydroxamate groups necessary for iron sequestration. Is also able, but less efficiently, to hydroxylate L-lysine (non acylated) in vitro. The sequence is that of L-lysine N6-monooxygenase MbtG (mbtG) from Mycolicibacterium paratuberculosis (strain ATCC BAA-968 / K-10) (Mycobacterium paratuberculosis).